Here is a 444-residue protein sequence, read N- to C-terminus: CCA-adding enzyme (444 aa).

Positions 57 and 60 each coordinate ATP. 2 residues coordinate CTP: Ser57 and Arg60. Mg(2+) contacts are provided by Asp69, Asp71, and Asp124. ATP contacts are provided by His147, Lys168, and Tyr177. Positions 147, 168, and 177 each coordinate CTP.

Belongs to the tRNA nucleotidyltransferase/poly(A) polymerase family. Archaeal CCA-adding enzyme subfamily. As to quaternary structure, homodimer. Mg(2+) serves as cofactor.

The catalysed reaction is a tRNA precursor + 2 CTP + ATP = a tRNA with a 3' CCA end + 3 diphosphate. It catalyses the reaction a tRNA with a 3' CCA end + 2 CTP + ATP = a tRNA with a 3' CCACCA end + 3 diphosphate. Catalyzes the addition and repair of the essential 3'-terminal CCA sequence in tRNAs without using a nucleic acid template. Adds these three nucleotides in the order of C, C, and A to the tRNA nucleotide-73, using CTP and ATP as substrates and producing inorganic pyrophosphate. tRNA 3'-terminal CCA addition is required both for tRNA processing and repair. Also involved in tRNA surveillance by mediating tandem CCA addition to generate a CCACCA at the 3' terminus of unstable tRNAs. While stable tRNAs receive only 3'-terminal CCA, unstable tRNAs are marked with CCACCA and rapidly degraded. The chain is CCA-adding enzyme from Methanococcus maripaludis (strain C5 / ATCC BAA-1333).